Reading from the N-terminus, the 379-residue chain is Queuine tRNA-ribosyltransferase (379 aa).

Asp94 (proton acceptor) is an active-site residue. Substrate-binding positions include 94 to 98, Asp148, Gln191, and Gly218; that span reads DSGGF. Positions 249–255 are RNA binding; sequence GVGSPDS. The active-site Nucleophile is the Asp268. The RNA binding; important for wobble base 34 recognition stretch occupies residues 273–277; it reads TRIAR. 4 residues coordinate Zn(2+): Cys306, Cys308, Cys311, and His337.

This sequence belongs to the queuine tRNA-ribosyltransferase family. In terms of assembly, homodimer. Within each dimer, one monomer is responsible for RNA recognition and catalysis, while the other monomer binds to the replacement base PreQ1. It depends on Zn(2+) as a cofactor.

The catalysed reaction is 7-aminomethyl-7-carbaguanine + guanosine(34) in tRNA = 7-aminomethyl-7-carbaguanosine(34) in tRNA + guanine. It participates in tRNA modification; tRNA-queuosine biosynthesis. Catalyzes the base-exchange of a guanine (G) residue with the queuine precursor 7-aminomethyl-7-deazaguanine (PreQ1) at position 34 (anticodon wobble position) in tRNAs with GU(N) anticodons (tRNA-Asp, -Asn, -His and -Tyr). Catalysis occurs through a double-displacement mechanism. The nucleophile active site attacks the C1' of nucleotide 34 to detach the guanine base from the RNA, forming a covalent enzyme-RNA intermediate. The proton acceptor active site deprotonates the incoming PreQ1, allowing a nucleophilic attack on the C1' of the ribose to form the product. After dissociation, two additional enzymatic reactions on the tRNA convert PreQ1 to queuine (Q), resulting in the hypermodified nucleoside queuosine (7-(((4,5-cis-dihydroxy-2-cyclopenten-1-yl)amino)methyl)-7-deazaguanosine). This is Queuine tRNA-ribosyltransferase from Bacillus mycoides (strain KBAB4) (Bacillus weihenstephanensis).